Here is a 119-residue protein sequence, read N- to C-terminus: MVFILGVNFNEHKLVQKALESFYGLGQQASARILAKYSIHPRAKMGTLPPKIVTALTAELSTMTIENDARRLVLDNIKRLRDMGTYRGRRHAMGLPVRGQQTRNQIANARKLNKIERHG.

It belongs to the universal ribosomal protein uS13 family. In terms of assembly, component of the mitochondrial small ribosomal subunit (mt-SSU). Mature N.crassa 74S mitochondrial ribosomes consist of a small (37S) and a large (54S) subunit. The 37S small subunit contains a 16S ribosomal RNA (16S mt-rRNA) and 32 different proteins. The 54S large subunit contains a 23S rRNA (23S mt-rRNA) and 42 different proteins.

It is found in the mitochondrion. Component of the mitochondrial ribosome (mitoribosome), a dedicated translation machinery responsible for the synthesis of mitochondrial genome-encoded proteins, including at least some of the essential transmembrane subunits of the mitochondrial respiratory chain. The mitoribosomes are attached to the mitochondrial inner membrane and translation products are cotranslationally integrated into the membrane. This chain is Small ribosomal subunit protein uS13m (sws2), found in Neurospora crassa (strain ATCC 24698 / 74-OR23-1A / CBS 708.71 / DSM 1257 / FGSC 987).